Consider the following 340-residue polypeptide: L-threonine 3-dehydrogenase (340 aa).

Cys38 is a binding site for Zn(2+). Residues Thr40 and His43 each act as charge relay system in the active site. His63, Glu64, Cys93, Cys96, Cys99, and Cys107 together coordinate Zn(2+). NAD(+)-binding positions include Ile175, Asp195, Arg200, 261–263 (LGI), and 285–286 (IY).

Belongs to the zinc-containing alcohol dehydrogenase family. Homotetramer. Zn(2+) serves as cofactor.

Its subcellular location is the cytoplasm. The enzyme catalyses L-threonine + NAD(+) = (2S)-2-amino-3-oxobutanoate + NADH + H(+). Its pathway is amino-acid degradation; L-threonine degradation via oxydo-reductase pathway; glycine from L-threonine: step 1/2. In terms of biological role, catalyzes the NAD(+)-dependent oxidation of L-threonine to 2-amino-3-ketobutyrate. This chain is L-threonine 3-dehydrogenase, found in Stenotrophomonas maltophilia (strain K279a).